The primary structure comprises 445 residues: Oxysterols receptor LXR-alpha (445 aa).

Disordered stretches follow at residues 1–34 (MSLWLEASMPDVSPDSATELWKTEPQDAGDQGGN) and 63–86 (ALLPRAETLPEPTELRPQKRKKGP). Residues 1-94 (MSLWLEASMP…GPAPKMLGNE (94 aa)) form a transactivation AF-1; required for ligand-independent transactivation function region. The segment at residues 93–168 (NELCSVCGDK…AGMREECVLS (76 aa)) is a DNA-binding region (nuclear receptor). NR C4-type zinc fingers lie at residues 96–116 (CSVCGDKASGFHYNVLSCEGC) and 132–156 (CHSGGHCPMDTYMRRKCQECRLRKC). Ser-191 is modified (phosphoserine). The transactivation AF-2; required for ligand-dependent transactivation function; mediates interaction with CCAR2 stretch occupies residues 203–445 (QLSPEQLGMI…LLSEIWDVHE (243 aa)). In terms of domain architecture, NR LBD spans 207 to 445 (EQLGMIEKLV…LLSEIWDVHE (239 aa)).

This sequence belongs to the nuclear hormone receptor family. NR1 subfamily. As to quaternary structure, heterodimer of NR1H3 and RXR (retinoic acid receptor). Interacts with CCAR2 (via N-terminus) in a ligand-independent manner. Interacts with SIRT1 and this interaction is inhibited by CCAR2. In terms of processing, ubiquitinated. Ubiquitination by UBR5 leads to its degradation: UBR5 specifically recognizes and binds ligand-bound NR1H3 when it is not associated with coactivators (NCOAs). In presence of NCOAs, the UBR5-degron is not accessible, preventing its ubiquitination and degradation.

It is found in the nucleus. The protein resides in the cytoplasm. Its function is as follows. Nuclear receptor that exhibits a ligand-dependent transcriptional activation activity. Interaction with retinoic acid receptor (RXR) shifts RXR from its role as a silent DNA-binding partner to an active ligand-binding subunit in mediating retinoid responses through target genes defined by LXRES. LXRES are DR4-type response elements characterized by direct repeats of two similar hexanuclotide half-sites spaced by four nucleotides. Plays an important role in the regulation of cholesterol homeostasis, regulating cholesterol uptake through MYLIP-dependent ubiquitination of LDLR, VLDLR and LRP8. Interplays functionally with RORA for the regulation of genes involved in liver metabolism. Induces LPCAT3-dependent phospholipid remodeling in endoplasmic reticulum (ER) membranes of hepatocytes, driving SREBF1 processing and lipogenesis. Via LPCAT3, triggers the incorporation of arachidonate into phosphatidylcholines of ER membranes, increasing membrane dynamics and enabling triacylglycerols transfer to nascent very low-density lipoprotein (VLDL) particles. Via LPCAT3 also counteracts lipid-induced ER stress response and inflammation, likely by modulating SRC kinase membrane compartmentalization and limiting the synthesis of lipid inflammatory mediators. The protein is Oxysterols receptor LXR-alpha (Nr1h3) of Mus musculus (Mouse).